The chain runs to 237 residues: Ribonuclease PH (237 aa).

Residues arginine 86 and 124 to 126 (GTR) contribute to the phosphate site.

Belongs to the RNase PH family. In terms of assembly, homohexameric ring arranged as a trimer of dimers.

It carries out the reaction tRNA(n+1) + phosphate = tRNA(n) + a ribonucleoside 5'-diphosphate. Functionally, phosphorolytic 3'-5' exoribonuclease that plays an important role in tRNA 3'-end maturation. Removes nucleotide residues following the 3'-CCA terminus of tRNAs; can also add nucleotides to the ends of RNA molecules by using nucleoside diphosphates as substrates, but this may not be physiologically important. Probably plays a role in initiation of 16S rRNA degradation (leading to ribosome degradation) during starvation. In Nitrobacter hamburgensis (strain DSM 10229 / NCIMB 13809 / X14), this protein is Ribonuclease PH.